The primary structure comprises 543 residues: Chaperonin GroEL 2 (543 aa).

ATP is bound by residues Thr29–Pro32, Asp86–Thr90, Gly413, and Asp495. Positions Lys524 to Tyr543 are disordered.

It belongs to the chaperonin (HSP60) family. Forms a cylinder of 14 subunits composed of two heptameric rings stacked back-to-back. Interacts with the co-chaperonin GroES.

The protein resides in the cytoplasm. The catalysed reaction is ATP + H2O + a folded polypeptide = ADP + phosphate + an unfolded polypeptide.. Together with its co-chaperonin GroES, plays an essential role in assisting protein folding. The GroEL-GroES system forms a nano-cage that allows encapsulation of the non-native substrate proteins and provides a physical environment optimized to promote and accelerate protein folding. This chain is Chaperonin GroEL 2, found in Acaryochloris marina (strain MBIC 11017).